The primary structure comprises 621 residues: Endoglucanase 25 (621 aa).

The disordered stretch occupies residues 1–26 (MYGRDPWGGPLEINTADSATDDDRSR). Topologically, residues 1-70 (MYGRDPWGGP…DLGCIIVSRK (70 aa)) are cytoplasmic. Residues 48–49 (LL) form a polarized targeting signal 1 (PTS1) region. The segment at 59–62 (YVDL) is polarized targeting signal 2 (PTS2). A helical; Signal-anchor for type II membrane protein transmembrane segment spans residues 71–91 (IFVWTVGTLVAAALLAGFITL). Residues 92–621 (IVKTVPRHHP…PPPPPAPWKP (530 aa)) lie on the Extracellular side of the membrane. Residues asparagine 108 and asparagine 133 are each glycosylated (N-linked (GlcNAc...) asparagine). Aspartate 165 (nucleophile) is an active-site residue. N-linked (GlcNAc...) asparagine glycans are attached at residues asparagine 216, asparagine 324, asparagine 345, asparagine 408, and asparagine 425. Residues histidine 513 and aspartate 561 contribute to the active site. Asparagine 567 is a glycosylation site (N-linked (GlcNAc...) asparagine). The active site involves glutamate 570.

It belongs to the glycosyl hydrolase 9 (cellulase E) family. Glycosylated. N-glycosylation of KOR in the endoplasmic reticulum followed by N-glycan modifications in the Golgi are essential for catalytic activity. In terms of tissue distribution, highly expressed in roots and stems, at intermediate levels in leaves and flowers, and at lower levels in siliques. Expressed in xylem (at protein level).

The protein localises to the cell membrane. It carries out the reaction Endohydrolysis of (1-&gt;4)-beta-D-glucosidic linkages in cellulose, lichenin and cereal beta-D-glucans.. Its function is as follows. Required for cellulose microfibril formation. Involved in cell wall assembly during cell elongation and cell plate maturation in cytokinesis. Required for secondary cell wall formation in the developing xylem. May cycle through different intracellular compartments, including plasma membrane. The sequence is that of Endoglucanase 25 (KOR) from Arabidopsis thaliana (Mouse-ear cress).